We begin with the raw amino-acid sequence, 329 residues long: tRNA(Ile)-lysidine synthase, chloroplastic (329 aa).

An ATP-binding site is contributed by 32 to 37 (SGGQDS).

Belongs to the tRNA(Ile)-lysidine synthase family.

It localises to the plastid. The protein resides in the chloroplast. It carries out the reaction cytidine(34) in tRNA(Ile2) + L-lysine + ATP = lysidine(34) in tRNA(Ile2) + AMP + diphosphate + H(+). Ligates lysine onto the cytidine present at position 34 of the AUA codon-specific tRNA(Ile) that contains the anticodon CAU, in an ATP-dependent manner. Cytidine is converted to lysidine, thus changing the amino acid specificity of the tRNA from methionine to isoleucine. This is tRNA(Ile)-lysidine synthase, chloroplastic from Pyropia yezoensis (Susabi-nori).